The sequence spans 328 residues: Ketol-acid reductoisomerase (NADP(+)) (328 aa).

One can recognise a KARI N-terminal Rossmann domain in the interval 2–182 (AKIYTDREAS…GATRAGVIET (181 aa)). Residues 25 to 28 (YGIQ), Arg-48, Ser-53, and 83 to 86 (DMEQ) each bind NADP(+). The active site involves His-108. Residue Gly-134 coordinates NADP(+). The KARI C-terminal knotted domain occupies 183–328 (TFAEETETDL…EEMRKLLFGP (146 aa)). Mg(2+)-binding residues include Asp-191, Glu-195, Glu-227, and Glu-231. Ser-252 serves as a coordination point for substrate.

It belongs to the ketol-acid reductoisomerase family. The cofactor is Mg(2+).

The enzyme catalyses (2R)-2,3-dihydroxy-3-methylbutanoate + NADP(+) = (2S)-2-acetolactate + NADPH + H(+). It catalyses the reaction (2R,3R)-2,3-dihydroxy-3-methylpentanoate + NADP(+) = (S)-2-ethyl-2-hydroxy-3-oxobutanoate + NADPH + H(+). It functions in the pathway amino-acid biosynthesis; L-isoleucine biosynthesis; L-isoleucine from 2-oxobutanoate: step 2/4. The protein operates within amino-acid biosynthesis; L-valine biosynthesis; L-valine from pyruvate: step 2/4. Functionally, involved in the biosynthesis of branched-chain amino acids (BCAA). Catalyzes an alkyl-migration followed by a ketol-acid reduction of (S)-2-acetolactate (S2AL) to yield (R)-2,3-dihydroxy-isovalerate. In the isomerase reaction, S2AL is rearranged via a Mg-dependent methyl migration to produce 3-hydroxy-3-methyl-2-ketobutyrate (HMKB). In the reductase reaction, this 2-ketoacid undergoes a metal-dependent reduction by NADPH to yield (R)-2,3-dihydroxy-isovalerate. The protein is Ketol-acid reductoisomerase (NADP(+)) of Pyrobaculum aerophilum (strain ATCC 51768 / DSM 7523 / JCM 9630 / CIP 104966 / NBRC 100827 / IM2).